The primary structure comprises 345 residues: L-threonine 3-dehydrogenase (345 aa).

C38 is a Zn(2+) binding site. Catalysis depends on charge relay system residues T40 and H43. Residues H63, E64, C93, C96, C99, and C107 each coordinate Zn(2+). NAD(+) contacts are provided by residues I176, D196, R201, 263–265, and 287–288; these read LGT and VT.

The protein belongs to the zinc-containing alcohol dehydrogenase family. As to quaternary structure, homotetramer. Zn(2+) serves as cofactor.

It localises to the cytoplasm. The catalysed reaction is L-threonine + NAD(+) = (2S)-2-amino-3-oxobutanoate + NADH + H(+). It functions in the pathway amino-acid degradation; L-threonine degradation via oxydo-reductase pathway; glycine from L-threonine: step 1/2. In terms of biological role, catalyzes the NAD(+)-dependent oxidation of L-threonine to 2-amino-3-ketobutyrate. This chain is L-threonine 3-dehydrogenase, found in Cutibacterium acnes (strain DSM 16379 / KPA171202) (Propionibacterium acnes).